The primary structure comprises 117 residues: Glycine cleavage system H-like protein (117 aa).

The region spanning 21–103 is the Lipoyl-binding domain; that stretch reads IVRLGLSSRM…ESEGWFVVLQ (83 aa). At Lys-62 the chain carries N6-lipoyllysine.

It belongs to the GcvH family. The cofactor is (R)-lipoate.

The sequence is that of Glycine cleavage system H-like protein from Chlamydia muridarum (strain MoPn / Nigg).